A 1052-amino-acid polypeptide reads, in one-letter code: Membrane-bound transcription factor site-1 protease (1052 aa).

The first 17 residues, 1 to 17 (MKLVNIWLLLLVVLLCG), serve as a signal peptide directing secretion. Positions 18–186 (KKHLGDRLEK…TGRHSSRRLL (169 aa)) are excised as a propeptide. S168 carries the phosphoserine; by FAM20C modification. The Lumenal segment spans residues 187–998 (RAIPRQVAQT…IMPGRYNQEV (812 aa)). The 283-residue stretch at 190–472 (PRQVAQTLQA…HGKLDLLRAY (283 aa)) folds into the Peptidase S8 domain. Catalysis depends on D218, which acts as the Charge relay system. N-linked (GlcNAc...) asparagine glycosylation is present at N236. H249 (charge relay system) is an active-site residue. The N-linked (GlcNAc...) asparagine glycan is linked to N305. The active-site Charge relay system is S414. 2 N-linked (GlcNAc...) asparagine glycosylation sites follow: N515 and N728. Residues 877 to 887 (PSLSHSGNRQR) are compositionally biased toward polar residues. The interval 877 to 899 (PSLSHSGNRQRPPSGAGSVTPER) is disordered. A glycan (N-linked (GlcNAc...) asparagine) is linked at N939. Residues 999–1021 (GQTIPVFAFLGAMVVLAFFVVQI) traverse the membrane as a helical segment. Topologically, residues 1022–1052 (NKAKSRPKRRKPRVKRPQLMQQVHPPKTPSV) are cytoplasmic. Positions 1027–1037 (RPKRRKPRVKR) are enriched in basic residues. The interval 1027 to 1052 (RPKRRKPRVKRPQLMQQVHPPKTPSV) is disordered.

It belongs to the peptidase S8 family. In terms of assembly, interacts with LYSET; this interaction bridges GNPTAB to MBTPS1. Requires Ca(2+) as cofactor. The 148 kDa zymogen is processed progressively into two membrane-bound 120 and 106 kDa forms in the endoplasmic reticulum, and late into a secreted 98 kDa form. The propeptide is autocatalytically removed through an intramolecular cleavage after Leu-186. Further cleavage generates 14, 10, and 8 kDa intermediates. As to expression, widely expressed.

Its subcellular location is the endoplasmic reticulum membrane. The protein localises to the golgi apparatus membrane. The enzyme catalyses Processes precursors containing basic and hydrophobic/aliphatic residues at P4 and P2, respectively, with a relatively relaxed acceptance of amino acids at P1 and P3.. With respect to regulation, inhibited by divalent copper and zinc ions, but not by nickel or cobalt. Inhibited by its prosegment, but not smaller fragments. Inhibited by 4-(2-aminoethyl)benzenesulfonyl fluoride (AEBSF), a serine protease inhibitor. Serine protease that cleaves after hydrophobic or small residues, provided that Arg or Lys is in position P4: known substrates include SREBF1/SREBP1, SREBF2/SREBP2, BDNF, GNPTAB, ATF6, ATF6B and FAM20C. Cleaves substrates after Arg-Ser-Val-Leu (SREBP2), Arg-His-Leu-Leu (ATF6), Arg-Gly-Leu-Thr (BDNF) and its own propeptide after Arg-Arg-Leu-Leu. Catalyzes the first step in the proteolytic activation of the sterol regulatory element-binding proteins (SREBPs) SREBF1/SREBP1 and SREBF2/SREBP2. Also mediates the first step in the proteolytic activation of the cyclic AMP-dependent transcription factor ATF-6 (ATF6 and ATF6B). Mediates the protein cleavage of GNPTAB into subunit alpha and beta, thereby participating in biogenesis of lysosomes. Cleaves the propeptide from FAM20C which is required for FAM20C secretion from the Golgi apparatus membrane and for enhancement of FAM20C kinase activity, promoting osteoblast differentiation and biomineralization. Involved in the regulation of M6P-dependent Golgi-to-lysosome trafficking of lysosomal enzymes. It is required for the activation of CREB3L2/BBF2H7, a transcriptional activator of MIA3/TANGO and other genes controlling mega vesicle formation. Therefore, it plays a key role in the regulation of mega vesicle-mediated collagen trafficking. In astrocytes and osteoblasts, upon DNA damage and ER stress, mediates the first step of the regulated intramembrane proteolytic activation of the transcription factor CREB3L1, leading to the inhibition of cell-cycle progression. This is Membrane-bound transcription factor site-1 protease from Homo sapiens (Human).